Here is a 630-residue protein sequence, read N- to C-terminus: 1-deoxy-D-xylulose-5-phosphate synthase (630 aa).

Thiamine diphosphate is bound by residues H72 and 113–115 (GHS). D144 is a Mg(2+) binding site. Thiamine diphosphate is bound by residues 145–146 (GA), N173, Y284, and E367. N173 lines the Mg(2+) pocket.

This sequence belongs to the transketolase family. DXPS subfamily. As to quaternary structure, homodimer. It depends on Mg(2+) as a cofactor. Thiamine diphosphate serves as cofactor.

The enzyme catalyses D-glyceraldehyde 3-phosphate + pyruvate + H(+) = 1-deoxy-D-xylulose 5-phosphate + CO2. It functions in the pathway metabolic intermediate biosynthesis; 1-deoxy-D-xylulose 5-phosphate biosynthesis; 1-deoxy-D-xylulose 5-phosphate from D-glyceraldehyde 3-phosphate and pyruvate: step 1/1. Catalyzes the acyloin condensation reaction between C atoms 2 and 3 of pyruvate and glyceraldehyde 3-phosphate to yield 1-deoxy-D-xylulose-5-phosphate (DXP). The polypeptide is 1-deoxy-D-xylulose-5-phosphate synthase (Bacillus cereus (strain G9842)).